The following is a 756-amino-acid chain: Catalase-peroxidase (756 aa).

The tryptophyl-tyrosyl-methioninium (Trp-Tyr) (with M-270) cross-link spans 91–244 (WHSAGTYRTG…LAAVQMGLIY (154 aa)). H92 serves as the catalytic Proton acceptor. The interval 198-230 (AQKKMQQPGDGTLVAEPENHANEESRTASGERN) is disordered. A compositionally biased stretch (basic and acidic residues) spans 214–223 (PENHANEESR). Positions 244-270 (YVNPEGPEGVPDPVASARDIRETFGRM) form a cross-link, tryptophyl-tyrosyl-methioninium (Tyr-Met) (with W-91). H285 serves as a coordination point for heme b. The tract at residues 371 to 390 (KNGAGAGKIPDAHDPSKRHA) is disordered.

It belongs to the peroxidase family. Peroxidase/catalase subfamily. In terms of assembly, homodimer or homotetramer. Heme b serves as cofactor. Formation of the three residue Trp-Tyr-Met cross-link is important for the catalase, but not the peroxidase activity of the enzyme.

It catalyses the reaction H2O2 + AH2 = A + 2 H2O. It carries out the reaction 2 H2O2 = O2 + 2 H2O. In terms of biological role, bifunctional enzyme with both catalase and broad-spectrum peroxidase activity. The polypeptide is Catalase-peroxidase (Pseudomonas syringae pv. tomato (strain ATCC BAA-871 / DC3000)).